The primary structure comprises 200 residues: Imidazoleglycerol-phosphate dehydratase (200 aa).

Substrate-binding positions include Glu13, His39 to His47, His68 to Glu72, Arg94, and Arg116. Mn(2+) is bound by residues His39, His68, His69, and Glu72. Positions 141, 165, 166, and 169 each coordinate Mn(2+). Substrate-binding positions include His165–Lys173 and Ser195–Lys197.

It belongs to the imidazoleglycerol-phosphate dehydratase family. Requires Mn(2+) as cofactor.

It localises to the cytoplasm. The catalysed reaction is D-erythro-1-(imidazol-4-yl)glycerol 3-phosphate = 3-(imidazol-4-yl)-2-oxopropyl phosphate + H2O. The protein operates within amino-acid biosynthesis; L-histidine biosynthesis; L-histidine from 5-phospho-alpha-D-ribose 1-diphosphate: step 6/9. The sequence is that of Imidazoleglycerol-phosphate dehydratase (hisB) from Lactococcus lactis subsp. lactis (strain IL1403) (Streptococcus lactis).